The primary structure comprises 161 residues: Peptidyl-prolyl cis-trans isomerase 10 (161 aa).

In terms of domain architecture, PPIase cyclophilin-type spans 1-153; the sequence is MSVTLHTTSG…VQQKIQNVTI (153 aa).

This sequence belongs to the cyclophilin-type PPIase family. PPIL3 subfamily.

It carries out the reaction [protein]-peptidylproline (omega=180) = [protein]-peptidylproline (omega=0). Functionally, PPIases accelerate the folding of proteins. It catalyzes the cis-trans isomerization of proline imidic peptide bonds in oligopeptides. The polypeptide is Peptidyl-prolyl cis-trans isomerase 10 (cyn-10) (Caenorhabditis elegans).